Consider the following 286-residue polypeptide: Bifunctional protein FolD (286 aa).

NADP(+)-binding positions include Gly-166–Ser-168 and Ser-191.

The protein belongs to the tetrahydrofolate dehydrogenase/cyclohydrolase family. As to quaternary structure, homodimer.

The catalysed reaction is (6R)-5,10-methylene-5,6,7,8-tetrahydrofolate + NADP(+) = (6R)-5,10-methenyltetrahydrofolate + NADPH. It carries out the reaction (6R)-5,10-methenyltetrahydrofolate + H2O = (6R)-10-formyltetrahydrofolate + H(+). The protein operates within one-carbon metabolism; tetrahydrofolate interconversion. Catalyzes the oxidation of 5,10-methylenetetrahydrofolate to 5,10-methenyltetrahydrofolate and then the hydrolysis of 5,10-methenyltetrahydrofolate to 10-formyltetrahydrofolate. In Lactiplantibacillus plantarum (strain ATCC BAA-793 / NCIMB 8826 / WCFS1) (Lactobacillus plantarum), this protein is Bifunctional protein FolD.